A 250-amino-acid polypeptide reads, in one-letter code: 3-deoxy-manno-octulosonate cytidylyltransferase 1 (250 aa).

Belongs to the KdsB family.

It localises to the cytoplasm. The catalysed reaction is 3-deoxy-alpha-D-manno-oct-2-ulosonate + CTP = CMP-3-deoxy-beta-D-manno-octulosonate + diphosphate. The protein operates within nucleotide-sugar biosynthesis; CMP-3-deoxy-D-manno-octulosonate biosynthesis; CMP-3-deoxy-D-manno-octulosonate from 3-deoxy-D-manno-octulosonate and CTP: step 1/1. Its pathway is bacterial outer membrane biogenesis; lipopolysaccharide biosynthesis. Activates KDO (a required 8-carbon sugar) for incorporation into bacterial lipopolysaccharide in Gram-negative bacteria. The sequence is that of 3-deoxy-manno-octulosonate cytidylyltransferase 1 from Actinobacillus pleuropneumoniae serotype 5b (strain L20).